We begin with the raw amino-acid sequence, 275 residues long: MKIELAKKYGFCFGVKRAIKIAENTENSATIGELIHNNEEIDRLHKKFGVKTLNDISEITDEKRLIIRTHGITKDDLDVLKSKNKELIDATCPFVKKPQQIVEKMSSEGYDIVIFGDKNHPEVKGVKSYAKGKVFVVLDVSELKNLKISNKVALVSQTTKRIENFTKIAEFLMTTTKELRIFNTICNATFQNQEAAAKLAKKADVMIIIGGKNSSNTKQLLLISQNFCKNSYLIENENELKKEWFLNKEICGITAGASTPEWIIKKVVKKINTMC.

A [4Fe-4S] cluster-binding site is contributed by C12. (2E)-4-hydroxy-3-methylbut-2-enyl diphosphate contacts are provided by H36 and H70. Residues H36 and H70 each contribute to the dimethylallyl diphosphate site. Isopentenyl diphosphate contacts are provided by H36 and H70. A [4Fe-4S] cluster-binding site is contributed by C92. H120 serves as a coordination point for (2E)-4-hydroxy-3-methylbut-2-enyl diphosphate. Position 120 (H120) interacts with dimethylallyl diphosphate. Isopentenyl diphosphate is bound at residue H120. E122 acts as the Proton donor in catalysis. T158 provides a ligand contact to (2E)-4-hydroxy-3-methylbut-2-enyl diphosphate. Position 186 (C186) interacts with [4Fe-4S] cluster. Residues S214, S215, N216, and S258 each coordinate (2E)-4-hydroxy-3-methylbut-2-enyl diphosphate. Residues S214, S215, N216, and S258 each contribute to the dimethylallyl diphosphate site. Isopentenyl diphosphate contacts are provided by S214, S215, N216, and S258.

It belongs to the IspH family. Requires [4Fe-4S] cluster as cofactor.

It catalyses the reaction isopentenyl diphosphate + 2 oxidized [2Fe-2S]-[ferredoxin] + H2O = (2E)-4-hydroxy-3-methylbut-2-enyl diphosphate + 2 reduced [2Fe-2S]-[ferredoxin] + 2 H(+). It carries out the reaction dimethylallyl diphosphate + 2 oxidized [2Fe-2S]-[ferredoxin] + H2O = (2E)-4-hydroxy-3-methylbut-2-enyl diphosphate + 2 reduced [2Fe-2S]-[ferredoxin] + 2 H(+). Its pathway is isoprenoid biosynthesis; dimethylallyl diphosphate biosynthesis; dimethylallyl diphosphate from (2E)-4-hydroxy-3-methylbutenyl diphosphate: step 1/1. It participates in isoprenoid biosynthesis; isopentenyl diphosphate biosynthesis via DXP pathway; isopentenyl diphosphate from 1-deoxy-D-xylulose 5-phosphate: step 6/6. Catalyzes the conversion of 1-hydroxy-2-methyl-2-(E)-butenyl 4-diphosphate (HMBPP) into a mixture of isopentenyl diphosphate (IPP) and dimethylallyl diphosphate (DMAPP). Acts in the terminal step of the DOXP/MEP pathway for isoprenoid precursor biosynthesis. In Campylobacter hominis (strain ATCC BAA-381 / DSM 21671 / CCUG 45161 / LMG 19568 / NCTC 13146 / CH001A), this protein is 4-hydroxy-3-methylbut-2-enyl diphosphate reductase.